The chain runs to 360 residues: Isopentenyl-diphosphate delta-isomerase (360 aa).

Residue 12–13 participates in substrate binding; sequence RK. FMN-binding positions include Ser70, 71 to 73, Ser101, and Asn130; that span reads SMT. Residue 101–103 coordinates substrate; it reads SMR. A substrate-binding site is contributed by Gln165. Glu166 provides a ligand contact to Mg(2+). FMN is bound by residues Lys197, 288–290, and 309–310; these read GIR and AG.

The protein belongs to the IPP isomerase type 2 family. In terms of assembly, homooctamer. Dimer of tetramers. FMN is required as a cofactor. Requires NADPH as cofactor. The cofactor is Mg(2+).

The protein localises to the cytoplasm. It catalyses the reaction isopentenyl diphosphate = dimethylallyl diphosphate. In terms of biological role, involved in the biosynthesis of isoprenoids. Catalyzes the 1,3-allylic rearrangement of the homoallylic substrate isopentenyl (IPP) to its allylic isomer, dimethylallyl diphosphate (DMAPP). The protein is Isopentenyl-diphosphate delta-isomerase of Chlorobium limicola (strain DSM 245 / NBRC 103803 / 6330).